The chain runs to 1147 residues: GPI inositol-deacylase (1147 aa).

The interval 1–94 (MRRHSSGSSE…RTSPSSPLGL (94 aa)) is disordered. Asparagine 23 is a glycosylation site (N-linked (GlcNAc...) asparagine). A compositionally biased stretch (basic and acidic residues) spans 28–49 (SAKDSRSSAHPTTKLDHNRNAD). The segment covering 50–63 (RPPSFSISRRSSSI) has biased composition (low complexity). An N-linked (GlcNAc...) asparagine glycan is attached at asparagine 74. The chain crosses the membrane as a helical span at residues 127–147 (AITFSALVAAIVGIGFLVAVL). The active site involves serine 310. A run of 2 helical transmembrane segments spans residues 795-815 (LYMR…ALVL) and 843-863 (IPLM…MAPA). N-linked (GlcNAc...) asparagine glycosylation is found at asparagine 865 and asparagine 873. The next 3 membrane-spanning stretches (helical) occupy residues 893–913 (PLFL…CTVF), 918–938 (LTLT…PGWI), and 965–985 (VLLL…VACL). N-linked (GlcNAc...) asparagine glycosylation is present at asparagine 1011. 3 helical membrane-spanning segments follow: residues 1015-1035 (SIFI…VVWV), 1052-1072 (VLSV…KMIP), and 1084-1104 (LLLF…AYTL).

It belongs to the GPI inositol-deacylase family.

It localises to the endoplasmic reticulum membrane. Functionally, involved in inositol deacylation of GPI-anchored proteins which plays important roles in the quality control and ER-associated degradation of GPI-anchored proteins. This is GPI inositol-deacylase (BST1) from Chaetomium globosum (strain ATCC 6205 / CBS 148.51 / DSM 1962 / NBRC 6347 / NRRL 1970) (Soil fungus).